A 554-amino-acid chain; its full sequence is Protein NODULATION SIGNALING PATHWAY 1 (554 aa).

The tract at residues 76–165 (TTSTTSLEPN…NSNNGNNKDG (90 aa)) is disordered. The segment covering 82 to 91 (LEPNSFNNIP) has biased composition (polar residues). A compositionally biased stretch (basic and acidic residues) spans 95 to 107 (LPKKRNAEDELSL). Over residues 150–162 (AKANGSNSNNGNN) the composition is skewed to low complexity. A GRAS domain is found at 159 to 548 (NGNNKDGRWA…QPVSFCSLWK (390 aa)). Residues 166 to 227 (RWAEQLLNPC…HHLSSSSSST (62 aa)) are leucine repeat I (LRI). A VHIID region spans residues 246 to 315 (LLKFYEFSPW…GGPPPLVRLT (70 aa)). Residues 281–285 (LHILD) carry the VHIID motif. Positions 331–373 (TPFSIGPCGDTFSSGLLGYAQSLNVNLQIKKLDNHPLQTLNAK) are leucine repeat II (LRII). The tract at residues 383-468 (LIVCAQFRLH…RDSDERKMME (86 aa)) is PFYRE. The tract at residues 471 to 548 (AAKALTNQRE…QPVSFCSLWK (78 aa)) is SAW.

The protein belongs to the GRAS family. As to expression, expressed in epidermal and cortical root cells.

It localises to the nucleus. In terms of biological role, transcriptional regulator essential for Nod-factor-induced gene expression. Acts downstream of calcium spiking. May be a target of DMI3, a calcium/calmodulin-dependent protein kinase (CCaMK). Is essential for Nod factor-elicited expression of ERN1. Transcription factor involved in the control of strigolactone biosynthesis in roots through the activation of the beta-carotene isomerase D27, which participates in a pathway leading to biosynthesis of strigolactones. The protein is Protein NODULATION SIGNALING PATHWAY 1 of Medicago truncatula (Barrel medic).